The sequence spans 284 residues: Urease accessory protein UreD (284 aa).

Residues 1–28 are disordered; that stretch reads MQSEQQAIGASGCEDAQQPVRQQRARGR.

This sequence belongs to the UreD family. In terms of assembly, ureD, UreF and UreG form a complex that acts as a GTP-hydrolysis-dependent molecular chaperone, activating the urease apoprotein by helping to assemble the nickel containing metallocenter of UreC. The UreE protein probably delivers the nickel.

It localises to the cytoplasm. Required for maturation of urease via the functional incorporation of the urease nickel metallocenter. The polypeptide is Urease accessory protein UreD (Agrobacterium fabrum (strain C58 / ATCC 33970) (Agrobacterium tumefaciens (strain C58))).